Consider the following 320-residue polypeptide: ATP-dependent 6-phosphofructokinase isozyme 1 (320 aa).

An ATP-binding site is contributed by Gly-12. Residues 22–26 (RGVVR) and 55–60 (RYSVSD) each bind ADP. Residues 73–74 (RF) and 103–106 (GDGS) each bind ATP. A Mg(2+)-binding site is contributed by Asp-104. 126 to 128 (TID) is a substrate binding site. Asp-128 serves as the catalytic Proton acceptor. Residue Arg-155 participates in ADP binding. Residues Arg-163 and 170 to 172 (MGR) contribute to the substrate site. ADP contacts are provided by residues 186–188 (GCE), Lys-212, and 214–216 (KKH). Substrate contacts are provided by residues Glu-223, Arg-244, and 250-253 (HIQR).

Belongs to the phosphofructokinase type A (PFKA) family. ATP-dependent PFK group I subfamily. Prokaryotic clade 'B1' sub-subfamily. Homotetramer. It depends on Mg(2+) as a cofactor.

It localises to the cytoplasm. It catalyses the reaction beta-D-fructose 6-phosphate + ATP = beta-D-fructose 1,6-bisphosphate + ADP + H(+). The protein operates within carbohydrate degradation; glycolysis; D-glyceraldehyde 3-phosphate and glycerone phosphate from D-glucose: step 3/4. With respect to regulation, allosterically activated by ADP and other diphosphonucleosides, and allosterically inhibited by phosphoenolpyruvate. Its function is as follows. Catalyzes the phosphorylation of D-fructose 6-phosphate to fructose 1,6-bisphosphate by ATP, the first committing step of glycolysis. The protein is ATP-dependent 6-phosphofructokinase isozyme 1 of Escherichia coli O6:H1 (strain CFT073 / ATCC 700928 / UPEC).